The following is a 256-amino-acid chain: Enolase-phosphatase E1 (256 aa).

Asp-14 and Glu-16 together coordinate Mg(2+). Residues 142 to 143 and Lys-176 each bind substrate; that span reads SS. A Mg(2+)-binding site is contributed by Asp-201.

This sequence belongs to the HAD-like hydrolase superfamily. MasA/MtnC family. As to quaternary structure, monomer. Requires Mg(2+) as cofactor.

It is found in the cytoplasm. Its subcellular location is the nucleus. It carries out the reaction 5-methylsulfanyl-2,3-dioxopentyl phosphate + H2O = 1,2-dihydroxy-5-(methylsulfanyl)pent-1-en-3-one + phosphate. Its pathway is amino-acid biosynthesis; L-methionine biosynthesis via salvage pathway; L-methionine from S-methyl-5-thio-alpha-D-ribose 1-phosphate: step 3/6. It participates in amino-acid biosynthesis; L-methionine biosynthesis via salvage pathway; L-methionine from S-methyl-5-thio-alpha-D-ribose 1-phosphate: step 4/6. Functionally, bifunctional enzyme that catalyzes the enolization of 2,3-diketo-5-methylthiopentyl-1-phosphate (DK-MTP-1-P) into the intermediate 2-hydroxy-3-keto-5-methylthiopentenyl-1-phosphate (HK-MTPenyl-1-P), which is then dephosphorylated to form the acireductone 1,2-dihydroxy-3-keto-5-methylthiopentene (DHK-MTPene). The protein is Enolase-phosphatase E1 of Drosophila melanogaster (Fruit fly).